Here is a 196-residue protein sequence, read N- to C-terminus: Small ribosomal subunit protein uS4c (196 aa).

The tract at residues 16–36 (GALPGLTRKTPKSGSNLKKKF) is disordered. An S4 RNA-binding domain is found at 89–169 (MRLDNILFRL…LPKHLTIDTL (81 aa)).

This sequence belongs to the universal ribosomal protein uS4 family. In terms of assembly, part of the 30S ribosomal subunit. Contacts protein S5. The interaction surface between S4 and S5 is involved in control of translational fidelity.

The protein localises to the plastid. It localises to the chloroplast. Its function is as follows. One of the primary rRNA binding proteins, it binds directly to 16S rRNA where it nucleates assembly of the body of the 30S subunit. In terms of biological role, with S5 and S12 plays an important role in translational accuracy. This is Small ribosomal subunit protein uS4c (rps4) from Brachypodium pinnatum (Tor grass).